We begin with the raw amino-acid sequence, 387 residues long: Sharpin (387 aa).

Residues Met-1–Ala-180 form a self-association region. The span at Glu-122–Pro-132 shows a compositional bias: polar residues. The segment at Glu-122–Leu-169 is disordered. At Ser-165 the chain carries Phosphoserine. The interval Leu-175 to Gly-310 is interaction with SHANK1. The Ubiquitin-like domain maps to Ile-219–Val-288. Residues Glu-305–Gln-349 form a disordered region. Ser-312 is subject to Phosphoserine. Low complexity predominate over residues Pro-339 to Gln-349. A RanBP2-type zinc finger spans residues Leu-348–Cys-377.

In terms of assembly, monomer and homodimer. Component of the LUBAC complex (linear ubiquitin chain assembly complex) which consists of SHARPIN, RBCK1 and RNF31. LUBAC has a MW of approximately 600 kDa suggesting a heteromultimeric assembly of its subunits. Associates with the TNF-R1 signaling complex (TNF-RSC) in a stimulation-dependent manner. Interacts with EYA1, EYA2, SHANK1 and SHANK3 (via ANK repeats). In terms of tissue distribution, highly expressed in skeletal muscle and placenta and at lower levels in brain, heart, colon without mucosa, thymus, spleen, kidney, liver, small intestine, lung and peripheral blood leukocytes. Up-regulated in various tumor tissues such as kidney, liver, ovary and pancreas tumors.

Its subcellular location is the cytoplasm. The protein localises to the cytosol. It localises to the synapse. It participates in protein modification; protein ubiquitination. Functionally, component of the LUBAC complex which conjugates linear polyubiquitin chains in a head-to-tail manner to substrates and plays a key role in NF-kappa-B activation and regulation of inflammation. LUBAC conjugates linear polyubiquitin to IKBKG and RIPK1 and is involved in activation of the canonical NF-kappa-B and the JNK signaling pathways. Linear ubiquitination mediated by the LUBAC complex interferes with TNF-induced cell death and thereby prevents inflammation. LUBAC is recruited to the TNF-R1 signaling complex (TNF-RSC) following polyubiquitination of TNF-RSC components by BIRC2 and/or BIRC3 and to conjugate linear polyubiquitin to IKBKG and possibly other components contributing to the stability of the complex. The LUBAC complex is also involved in innate immunity by conjugating linear polyubiquitin chains at the surface of bacteria invading the cytosol to form the ubiquitin coat surrounding bacteria. LUBAC is not able to initiate formation of the bacterial ubiquitin coat, and can only promote formation of linear polyubiquitins on pre-existing ubiquitin. The bacterial ubiquitin coat acts as an 'eat-me' signal for xenophagy and promotes NF-kappa-B activation. Together with OTULIN, the LUBAC complex regulates the canonical Wnt signaling during angiogenesis. This is Sharpin from Homo sapiens (Human).